A 172-amino-acid polypeptide reads, in one-letter code: Fimbrial-like protein FimF (172 aa).

Residues 1–21 (MILRRVFIAIGCVLFSPLSQA) form the signal peptide. A disulfide bridge connects residues Cys41 and Cys81.

This sequence belongs to the fimbrial protein family.

Its subcellular location is the fimbrium. The polypeptide is Fimbrial-like protein FimF (fimF) (Salmonella typhimurium (strain LT2 / SGSC1412 / ATCC 700720)).